We begin with the raw amino-acid sequence, 935 residues long: Peptidyl-glycine alpha-amidating monooxygenase A (935 aa).

Residues M1–T36 form the signal peptide. Residues M1 to Q390 form a peptidylglycine alpha-hydroxylating monooxygenase region. The Intragranular portion of the chain corresponds to R37 to F825. Disulfide bonds link C43/C182, C77/C122, C110/C127, C223/C330, and C289/C311. Residues H103 and H104 each contribute to the Cu(2+) site. Residues H168, H238, H240, and M310 each coordinate Cu(2+). The segment at H362–E385 is disordered. Positions D391 to V712 are peptidyl-alpha-hydroxyglycine alpha-amidating lyase. R426 serves as a coordination point for a protein. 3 NHL repeats span residues S463–G504, L512–N557, and G565–E609. Disulfide bonds link C526/C547 and C594/C605. The a protein site is built by Y546 and R598. N658 carries an N-linked (GlcNAc...) asparagine glycan. Residues G662–S705 form an NHL 4 repeat. A compositionally biased stretch (basic and acidic residues) spans F728–Q751. Disordered regions lie at residues F728–K764 and Q778–K812. Residue N739 is glycosylated (N-linked (GlcNAc...) asparagine). Over residues N755–K764 the composition is skewed to polar residues. A helical membrane pass occupies residues V826–I846. Residues R847–S935 lie on the Cytoplasmic side of the membrane. Positions K896–S935 are disordered. Over residues E909–Y922 the composition is skewed to acidic residues. Positions P925–S935 are enriched in pro residues.

In the C-terminal section; belongs to the peptidyl-alpha-hydroxyglycine alpha-amidating lyase family. It in the N-terminal section; belongs to the copper type II ascorbate-dependent monooxygenase family. Monomer. It depends on Zn(2+) as a cofactor. Cu(2+) serves as cofactor.

It localises to the cytoplasmic vesicle. It is found in the secretory vesicle membrane. The enzyme catalyses a [peptide]-C-terminal glycine + 2 L-ascorbate + O2 = a [peptide]-C-terminal (2S)-2-hydroxyglycine + 2 monodehydro-L-ascorbate radical + H2O. The catalysed reaction is a [peptide]-C-terminal (2S)-2-hydroxyglycine = a [peptide]-C-terminal amide + glyoxylate. Functionally, bifunctional enzyme that catalyzes amidation of the C-terminus of proteins. Alpha-amidation is present at the C-terminus of many endocrine hormones and neuropeptides and is required for their activity. C-terminal amidation also takes place in response to protein fragmentation triggered by oxidative stress, promoting degradation of amidated protein fragments by the proteasome. Alpha-amidation involves two sequential reactions, both of which are catalyzed by separate catalytic domains of the enzyme. The first step, catalyzed by peptidyl alpha-hydroxylating monooxygenase (PHM) domain, is the copper-, ascorbate-, and O2- dependent stereospecific hydroxylation (with S stereochemistry) at the alpha-carbon (C-alpha) of the C-terminal glycine of the peptidylglycine substrate. The second step, catalyzed by the peptidylglycine amidoglycolate lyase (PAL) domain, is the zinc-dependent cleavage of the N-C-alpha bond, producing the alpha-amidated peptide and glyoxylate. In Xenopus laevis (African clawed frog), this protein is Peptidyl-glycine alpha-amidating monooxygenase A (pam-a).